Consider the following 274-residue polypeptide: Putative 2-succinyl-6-hydroxy-2,4-cyclohexadiene-1-carboxylate synthase (274 aa).

One can recognise an AB hydrolase-1 domain in the interval 26–259; the sequence is AVVCLHGFTG…KAGHTVHVEQ (234 aa).

It belongs to the AB hydrolase superfamily. MenH family. As to quaternary structure, monomer.

It carries out the reaction 5-enolpyruvoyl-6-hydroxy-2-succinyl-cyclohex-3-ene-1-carboxylate = (1R,6R)-6-hydroxy-2-succinyl-cyclohexa-2,4-diene-1-carboxylate + pyruvate. It participates in quinol/quinone metabolism; 1,4-dihydroxy-2-naphthoate biosynthesis; 1,4-dihydroxy-2-naphthoate from chorismate: step 3/7. It functions in the pathway quinol/quinone metabolism; menaquinone biosynthesis. Functionally, catalyzes a proton abstraction reaction that results in 2,5-elimination of pyruvate from 2-succinyl-5-enolpyruvyl-6-hydroxy-3-cyclohexene-1-carboxylate (SEPHCHC) and the formation of 2-succinyl-6-hydroxy-2,4-cyclohexadiene-1-carboxylate (SHCHC). In Bacillus subtilis (strain 168), this protein is Putative 2-succinyl-6-hydroxy-2,4-cyclohexadiene-1-carboxylate synthase.